The chain runs to 309 residues: Manganese ABC transporter substrate-binding lipoprotein PsaA (309 aa).

Residues 1–19 form the signal peptide; it reads MKKLGTLLVLFLSAIILVA. A lipid anchor (N-palmitoyl cysteine) is attached at Cys20. A lipid anchor (S-diacylglycerol cysteine) is attached at Cys20. Residues His67, His139, Glu205, and Asp280 each coordinate Mn(2+).

Belongs to the bacterial solute-binding protein 9 family. Lipoprotein receptor antigen (Lrai) subfamily.

It is found in the cell membrane. Functionally, part of the ATP-binding cassette (ABC) transport system PsaABC involved in manganese import. Binds manganese with high affinity and specificity and delivers it to the membrane permease for translocation into the cytoplasm. Also acts as an adhesin which is involved on adherence to extracellular matrix. It is an important factor in pathogenesis and infection. This Streptococcus pneumoniae serotype 4 (strain ATCC BAA-334 / TIGR4) protein is Manganese ABC transporter substrate-binding lipoprotein PsaA (psaA).